The chain runs to 225 residues: MNSIKFPVLDRTTKNSVISTTLNDLSNWSRLSSLWPLLYGTSCCFIEFASLIGSRFDFDRYGLVPRSSPRQADLILTAGTVTMKMAPSLVRLYEQMPEPKYVIAMGACTITGGMFSTDSYSTVRGVDKLIPVDVYLPGCPPKPEAVIDAITKLRKKIAREIYKDRIRPQRGNRCFTTNHKFFVVGSPHTGNYDQELLYAPSSTSEISTETFFKYKSPVSSNELVN.

Residues cysteine 43, cysteine 44, cysteine 108, and cysteine 139 each coordinate [4Fe-4S] cluster.

This sequence belongs to the complex I 20 kDa subunit family. As to quaternary structure, NDH is composed of at least 16 different subunits, 5 of which are encoded in the nucleus. It depends on [4Fe-4S] cluster as a cofactor.

The protein localises to the plastid. It localises to the chloroplast thylakoid membrane. The enzyme catalyses a plastoquinone + NADH + (n+1) H(+)(in) = a plastoquinol + NAD(+) + n H(+)(out). The catalysed reaction is a plastoquinone + NADPH + (n+1) H(+)(in) = a plastoquinol + NADP(+) + n H(+)(out). Its function is as follows. NDH shuttles electrons from NAD(P)H:plastoquinone, via FMN and iron-sulfur (Fe-S) centers, to quinones in the photosynthetic chain and possibly in a chloroplast respiratory chain. The immediate electron acceptor for the enzyme in this species is believed to be plastoquinone. Couples the redox reaction to proton translocation, and thus conserves the redox energy in a proton gradient. This chain is NAD(P)H-quinone oxidoreductase subunit K, chloroplastic, found in Barbarea verna (Land cress).